We begin with the raw amino-acid sequence, 563 residues long: Arginine--tRNA ligase (563 aa).

A 'HIGH' region motif is present at residues P122–H132.

Belongs to the class-I aminoacyl-tRNA synthetase family. Monomer.

It localises to the cytoplasm. It catalyses the reaction tRNA(Arg) + L-arginine + ATP = L-arginyl-tRNA(Arg) + AMP + diphosphate. The chain is Arginine--tRNA ligase from Ligilactobacillus salivarius (strain UCC118) (Lactobacillus salivarius).